The primary structure comprises 260 residues: Thiamine thiazole synthase (260 aa).

NAD(+)-binding positions include Ala36, 55-56 (EQ), Gly63, and 154-156 (HVD). Residues Asp156 and His171 each coordinate Fe cation. Met224 contributes to the NAD(+) binding site. Arg234 provides a ligand contact to glycine.

This sequence belongs to the THI4 family. As to quaternary structure, homooctamer; tetramer of dimers. The cofactor is Fe(2+).

It carries out the reaction hydrogen sulfide + glycine + NAD(+) = ADP-5-ethyl-4-methylthiazole-2-carboxylate + nicotinamide + 3 H2O + H(+). It functions in the pathway cofactor biosynthesis; thiamine diphosphate biosynthesis. Functionally, involved in the biosynthesis of the thiazole moiety of thiamine. Catalyzes the conversion of NAD and glycine to adenosine diphosphate 5-(2-hydroxyethyl)-4-methylthiazole-2-carboxylate (ADT), an adenylated thiazole intermediate, using free sulfide as a source of sulfur. The sequence is that of Thiamine thiazole synthase from Methanosarcina acetivorans (strain ATCC 35395 / DSM 2834 / JCM 12185 / C2A).